Here is a 181-residue protein sequence, read N- to C-terminus: 6,7-dimethyl-8-ribityllumazine synthase (181 aa).

Residues Tyr-27, 58-60 (ALE), and 87-89 (CVI) contribute to the 5-amino-6-(D-ribitylamino)uracil site. Residue 92–93 (ET) coordinates (2S)-2-hydroxy-3-oxobutyl phosphate. The active-site Proton donor is His-95. Asn-120 lines the 5-amino-6-(D-ribitylamino)uracil pocket. Arg-134 is a (2S)-2-hydroxy-3-oxobutyl phosphate binding site.

The protein belongs to the DMRL synthase family.

It carries out the reaction (2S)-2-hydroxy-3-oxobutyl phosphate + 5-amino-6-(D-ribitylamino)uracil = 6,7-dimethyl-8-(1-D-ribityl)lumazine + phosphate + 2 H2O + H(+). Its pathway is cofactor biosynthesis; riboflavin biosynthesis; riboflavin from 2-hydroxy-3-oxobutyl phosphate and 5-amino-6-(D-ribitylamino)uracil: step 1/2. Functionally, catalyzes the formation of 6,7-dimethyl-8-ribityllumazine by condensation of 5-amino-6-(D-ribitylamino)uracil with 3,4-dihydroxy-2-butanone 4-phosphate. This is the penultimate step in the biosynthesis of riboflavin. The sequence is that of 6,7-dimethyl-8-ribityllumazine synthase from Methylobacterium sp. (strain 4-46).